A 111-amino-acid polypeptide reads, in one-letter code: Cytochrome c (111 aa).

Position 1 is an N-acetylalanine (alanine 1). Heme c-binding residues include cysteine 22, cysteine 25, and histidine 26. Position 80 is an N6,N6,N6-trimethyllysine (lysine 80). Heme c is bound at residue methionine 88. N6,N6,N6-trimethyllysine is present on lysine 94.

Belongs to the cytochrome c family. Binds 1 heme c group covalently per subunit.

The protein resides in the mitochondrion intermembrane space. Its function is as follows. Electron carrier protein. The oxidized form of the cytochrome c heme group can accept an electron from the heme group of the cytochrome c1 subunit of cytochrome reductase. Cytochrome c then transfers this electron to the cytochrome oxidase complex, the final protein carrier in the mitochondrial electron-transport chain. This is Cytochrome c from Sesamum indicum (Oriental sesame).